A 299-amino-acid polypeptide reads, in one-letter code: Tryptophan prenyltransferase ComQ (299 aa).

Positions 67 and 71 each coordinate Mg(2+).

This sequence belongs to the FPP/GGPP synthase family. The cofactor is Mg(2+).

It localises to the cell membrane. The catalysed reaction is L-tryptophyl-[protein] + (2E,6E)-farnesyl diphosphate = (2S,3R)-3-farnesyl-2,3-dihydro-2,N(alpha)-cyclo-L-tryptophyl-[protein] + diphosphate. Part of a major quorum-sensing system that regulates the development of genetic competence. Involved in the maturation of the competence pheromone ComX. Acts by catalyzing the transfer of a farnesyl group on the ComX pheromone. Shows weak geranylation activity with geranyl diphosphate (GPP). This Bacillus subtilis (strain 168) protein is Tryptophan prenyltransferase ComQ.